A 248-amino-acid polypeptide reads, in one-letter code: DCN1-like protein 4 (248 aa).

The interval 1–35 (MPRGKRRAADTISDNMDHGQPKRARTSYTSIPTQQ) is disordered. Residues 26-35 (TSYTSIPTQQ) are compositionally biased toward polar residues. Residues 47–235 (FSQKRCMAWF…MLDEFVEWLR (189 aa)) enclose the DCUN1 domain.

Its subcellular location is the nucleus. Inhibits neddylation of cullin components of SCF-type E3 ubiquitin ligase complexes and thus regulates SCF-type complex activity. Essential for development. Function inhibits cell proliferation and cell growth. This is DCN1-like protein 4 from Drosophila melanogaster (Fruit fly).